The sequence spans 364 residues: MSKKRNNLLIAASGTGGHIFPALAVSKKVEKDWDIHWLGVTKRLDSEFVPSKYNLLTLNLETPKKNIFRVFQYLKILFSIFNIIKILKEKKINLVFTTGGYISAPTILAAKWLKIPVILHESNLIPGTVTKYFGFLCEFVLLGFKDTNYYLKNCKTIFTGTPLRDQFYEINPLPKWVPRGKGPLLIVMGGSQGAKMINEIFYESIDFLIKQNFRIVHIIGENNSNNLVKFKSNNYVQKKFTNQIASLMQNCELVISRSGAGTINELIQTGKPSILIPYPNSKNNHQEKNAMILSSIGGAILMNQNQISKLFFEETLKRILKFKLKKGKPKYEILDLMKENIKNLDTLKSTNEIKKLINYFLKEF.

Residues 15–17, N123, R164, S191, and Q286 contribute to the UDP-N-acetyl-alpha-D-glucosamine site; that span reads TGG.

Belongs to the glycosyltransferase 28 family. MurG subfamily.

The protein localises to the cell inner membrane. It carries out the reaction di-trans,octa-cis-undecaprenyl diphospho-N-acetyl-alpha-D-muramoyl-L-alanyl-D-glutamyl-meso-2,6-diaminopimeloyl-D-alanyl-D-alanine + UDP-N-acetyl-alpha-D-glucosamine = di-trans,octa-cis-undecaprenyl diphospho-[N-acetyl-alpha-D-glucosaminyl-(1-&gt;4)]-N-acetyl-alpha-D-muramoyl-L-alanyl-D-glutamyl-meso-2,6-diaminopimeloyl-D-alanyl-D-alanine + UDP + H(+). The protein operates within cell wall biogenesis; peptidoglycan biosynthesis. Functionally, cell wall formation. Catalyzes the transfer of a GlcNAc subunit on undecaprenyl-pyrophosphoryl-MurNAc-pentapeptide (lipid intermediate I) to form undecaprenyl-pyrophosphoryl-MurNAc-(pentapeptide)GlcNAc (lipid intermediate II). The protein is UDP-N-acetylglucosamine--N-acetylmuramyl-(pentapeptide) pyrophosphoryl-undecaprenol N-acetylglucosamine transferase of Prochlorococcus marinus subsp. pastoris (strain CCMP1986 / NIES-2087 / MED4).